The chain runs to 35 residues: Cupiennin-1a (35 aa).

A Glutamic acid 1-amide modification is found at glutamate 35.

This sequence belongs to the cationic peptide 04 (cupiennin) family. 01 subfamily. As to quaternary structure, monomer. Interacts with CSTX-1 (AC P81694), CSTX-9 (AC P58604), and CSTX-13 (AC P83919). Expressed by the venom gland.

It localises to the secreted. Has antimicrobial activity against B.subtilis, E.coli, E.faecalis, P.denitrificans, P.aeruginosa, P.putida, S.aureus, and S.epidermidis. Shows insecticidal and hemolytic activities. Probably acts by disturbing membrane function with its amphipathic structure. Synergistically increases the insecticidal activity of CSTX-1 (AC P81694), CSTX-9 (AC P58604), and CSTX-13 (AC P83919) by up to 65%. Also inhibits the formation of nitric oxide by neuronal nitric oxide synthase. The protein is Cupiennin-1a of Cupiennius salei (American wandering spider).